Here is a 165-residue protein sequence, read N- to C-terminus: 3-hydroxyacyl-[acyl-carrier-protein] dehydratase FabZ (165 aa).

The active site involves H68.

It belongs to the thioester dehydratase family. FabZ subfamily.

Its subcellular location is the cytoplasm. It carries out the reaction a (3R)-hydroxyacyl-[ACP] = a (2E)-enoyl-[ACP] + H2O. Its function is as follows. Involved in unsaturated fatty acids biosynthesis. Catalyzes the dehydration of short chain beta-hydroxyacyl-ACPs and long chain saturated and unsaturated beta-hydroxyacyl-ACPs. This Methylobacterium sp. (strain 4-46) protein is 3-hydroxyacyl-[acyl-carrier-protein] dehydratase FabZ.